We begin with the raw amino-acid sequence, 409 residues long: Probable glutaryl-CoA dehydrogenase, mitochondrial (409 aa).

110 to 111 (RS) serves as a coordination point for substrate. Residues 149–152 (FGLT), S158, and 184–186 (WIS) contribute to the FAD site. Substrate is bound at residue S158. Residues 261–265 (FGCLN) and R268 contribute to the substrate site. E388 acts as the Proton acceptor in catalysis. T390 and F408 together coordinate FAD.

Belongs to the acyl-CoA dehydrogenase family. Requires FAD as cofactor.

The protein localises to the mitochondrion matrix. The enzyme catalyses glutaryl-CoA + oxidized [electron-transfer flavoprotein] + 2 H(+) = (2E)-butenoyl-CoA + reduced [electron-transfer flavoprotein] + CO2. It functions in the pathway amino-acid metabolism; lysine degradation. It participates in amino-acid metabolism; tryptophan metabolism. In Caenorhabditis elegans, this protein is Probable glutaryl-CoA dehydrogenase, mitochondrial.